The chain runs to 732 residues: MSKLKIAVSDSCPDCFTTQRECIYINESRNIDVAAIVLSLNDVTCGKLDEIDATGYGIPVFIATENQERVPAEYLPRISGVFENCESRREFYGRQLETAASHYETQLRPPFFRALVDYVNQGNSAFDCPGHQGGEFFRRHPAGNQFVEYFGEALFRADLCNADVAMGDLLIHEGAPCIAQQHAAKVFNADKTYFVLNGTSSSNKVVLNALLTPGDLVLFDRNNHKSNHHGALLQAGATPVYLETARNPYGFIGGIDAHCFEESYLRELIAEVAPQRAKEARPFRLAVIQLGTYDGTIYNARQVVDKIGHLCDYILFDSAWVGYEQFIPMMADCSPLLLDLNENDPGILVTQSVHKQQAGFSQTSQIHKKDSHIKGQQRYVPHKRMNNAFMMHASTSPFYPLFAALNINAKMHEGVSGRNMWMDCVVNGINARKLILDNCQHIRPFVPELVDGKPWQSYETAQIAVDLRFFQFVPGEHWHSFEGYAENQYFVDPCKLLLTTPGIDARNGEYEAFGVPATILANFLRENGVVPEKCDLNSILFLLTPAEDMAKLQQLVALLVRFEKLLESDAPLAEVLPSIYKQHEERYAGYTLRQLCQEMHDLYARHNVKQLQKEMFRKEHFPRVSMNPQEANYAYLRGEVELVRLPDAEGRIAAEGALPYPPGVLCVVPGEIWGGAVLRYFSALEEGINLLPGFAPELQGVYIEEHDGRKQVWCYVIKPRDAQSTLLKGEKL.

Lys355 bears the N6-(pyridoxal phosphate)lysine mark.

It belongs to the Orn/Lys/Arg decarboxylase class-I family. Pyridoxal 5'-phosphate serves as cofactor.

It catalyses the reaction L-ornithine + H(+) = putrescine + CO2. It participates in amine and polyamine biosynthesis; putrescine biosynthesis via L-ornithine pathway; putrescine from L-ornithine: step 1/1. The first enzyme leading to putrescine and thus polyamine synthesis. The protein is Inducible ornithine decarboxylase of Escherichia coli (strain K12).